The primary structure comprises 351 residues: Delta(7)-sterol 5(6)-desaturase (351 aa).

Transmembrane regions (helical) follow at residues 88-108 (LSLF…VASF), 136-156 (GLGA…LELH), and 173-193 (VRLA…IYLL). The Fatty acid hydroxylase domain occupies 180-305 (LFFILFTDFG…FTTLWDRLGG (126 aa)). Residues 194–198 (HRWLH) carry the Histidine box-1 motif. The Histidine box-2 motif lies at 207–211 (HKKHH). A helical membrane pass occupies residues 237–257 (HLFPMLFPLHKVSYLVLFTFV). The short motif at 282–286 (HTVHH) is the Histidine box-3 element.

Belongs to the sterol desaturase family. Fe cation is required as a cofactor.

It is found in the endoplasmic reticulum membrane. It catalyses the reaction a Delta(7)-sterol + 2 Fe(II)-[cytochrome b5] + O2 + 2 H(+) = a Delta(5),Delta(7)-sterol + 2 Fe(III)-[cytochrome b5] + 2 H2O. Its pathway is steroid metabolism; ergosterol biosynthesis; ergosterol from zymosterol: step 3/5. Catalyzes the introduction of a C-5 double bond in the B ring of ergosterol. May contribute to the regulation of ergosterol biosynthesis. This is Delta(7)-sterol 5(6)-desaturase (ERG3) from Eremothecium gossypii (strain ATCC 10895 / CBS 109.51 / FGSC 9923 / NRRL Y-1056) (Yeast).